The following is a 279-amino-acid chain: DegV domain-containing protein SA1258 (279 aa).

In terms of domain architecture, DegV spans 4-278; the sequence is QIIVTDSTSD…QGAIGLVVLK (275 aa). Residues Thr-61 and Ser-93 each coordinate hexadecanoate.

Its function is as follows. May bind long-chain fatty acids, such as palmitate, and may play a role in lipid transport or fatty acid metabolism. This Staphylococcus aureus (strain N315) protein is DegV domain-containing protein SA1258.